We begin with the raw amino-acid sequence, 427 residues long: Lactadherin (427 aa).

Residues 1–18 (MPCPRLLAALFCSSGLFA) form the signal peptide. EGF-like domains follow at residues 20–59 (SGDF…LLCN) and 62–106 (EHGP…IHCE). Disulfide bonds link C24–C35, C29–C47, and C49–C58. A glycan (O-linked (Fuc...) serine; in PAS-6) is linked at S27. A glycan (O-linked (Fuc...) threonine; in PAS-7) is linked at T34. N59 is a glycosylation site (N-linked (GlcNAc...) (hybrid) asparagine; in PAS-6 and PAS-7). Disulfide bonds link C66/C77, C71/C94, C96/C105, C109/C265, C252/C256, and C270/C427. Residues 85–87 (RGD) carry the Cell attachment site motif. F5/8 type C domains lie at 109–265 (CTSP…LLGC) and 270–427 (CTEP…LLGC). An N-linked (GlcNAc...) (high mannose) asparagine; in PAS-6 glycan is attached at N227.

The two O-linked glycans consist of Gal, GlcNAc and Fuc, with probably Fuc as reducing terminal sugar. Milk and spermatozoan. Also present in epididymis, kidney, heart, lymphatic gland and spleen but not esophagus, small intestine, muscle and liver.

The protein resides in the membrane. Its subcellular location is the secreted. It is found in the cytoplasmic vesicle. It localises to the secretory vesicle. The protein localises to the acrosome membrane. Contributes to phagocytic removal of apoptotic cells in many tissues. Plays an important role in the maintenance of intestinal epithelial homeostasis and the promotion of mucosal healing. Promotes VEGF-dependent neovascularization. Specific ligand for the alpha-v/beta-3 and alpha-v/beta-5 receptors. Also binds to phosphatidylserine-enriched cell surfaces in a receptor-independent manner. Zona pellucida-binding protein which may play a role in gamete interaction. In Bos taurus (Bovine), this protein is Lactadherin (MFGE8).